Reading from the N-terminus, the 161-residue chain is Endoribonuclease YbeY (161 aa).

Residues H121, H125, and H131 each coordinate Zn(2+).

The protein belongs to the endoribonuclease YbeY family. Zn(2+) is required as a cofactor.

It is found in the cytoplasm. In terms of biological role, single strand-specific metallo-endoribonuclease involved in late-stage 70S ribosome quality control and in maturation of the 3' terminus of the 16S rRNA. This is Endoribonuclease YbeY from Xanthomonas axonopodis pv. citri (strain 306).